A 736-amino-acid chain; its full sequence is ATP-dependent zinc metalloprotease FtsH (736 aa).

2 disordered regions span residues methionine 1 to arginine 39 and glutamine 57 to methionine 83. The Cytoplasmic portion of the chain corresponds to methionine 1–lysine 87. Residues glutamine 57–glycine 73 are compositionally biased toward polar residues. Residues alanine 88–proline 108 traverse the membrane as a helical segment. Residues aspartate 109–tryptophan 205 lie on the Periplasmic side of the membrane. A helical transmembrane segment spans residues alanine 206–phenylalanine 226. At arginine 227–serine 736 the chain is on the cytoplasmic side. Glycine 301–threonine 308 contributes to the ATP binding site. A Zn(2+)-binding site is contributed by histidine 522. The active site involves glutamate 523. Histidine 526 and aspartate 598 together coordinate Zn(2+). Residues proline 706–serine 736 are disordered.

It in the central section; belongs to the AAA ATPase family. This sequence in the C-terminal section; belongs to the peptidase M41 family. In terms of assembly, homohexamer. Zn(2+) is required as a cofactor.

It localises to the cell inner membrane. Its function is as follows. Acts as a processive, ATP-dependent zinc metallopeptidase for both cytoplasmic and membrane proteins. Plays a role in the quality control of integral membrane proteins. This chain is ATP-dependent zinc metalloprotease FtsH, found in Syntrophus aciditrophicus (strain SB).